The sequence spans 420 residues: MTMIFDKGNVEDFDKELWDAIHAEEERQEHHIELIASENMVSKAVMAAQGSVLTNKYAESYPGNRYYGGTECVDIVETLAIERAKKLFGAAFANVQAHSGSQANAAAYMALIEAGDTVLGMDLAAGGHLTHGSPVNFSGKTYHFVGYSVDADTETLNYEAILEQAKAVQPKLIVAGASAYSRSIDFEKFRAIADHVGAYLMVDMAHIAGLVAAGVHPSPVPYAHIVTSTTHKTLRGPRGGLILTNDEALAKKINSAVFPGLQGGPLEHVIAAKAVAFKEALDPAFKDYAQAIIDNTAAMAAVFAQDDRFRLISGGTDNHVFLVDVTKVIANGKLAQNLLDEVNITLNKNAIPFETLSPFKTSGIRIGCAAITSRGMSVKESQTIARLIIKALVNHDQETILEEVRQEVRQLTDAFPLYKK.

(6S)-5,6,7,8-tetrahydrofolate-binding positions include Leu123 and 127–129; that span reads GHL. At Lys232 the chain carries N6-(pyridoxal phosphate)lysine. 357-359 lines the (6S)-5,6,7,8-tetrahydrofolate pocket; that stretch reads SPF.

The protein belongs to the SHMT family. As to quaternary structure, homodimer. Requires pyridoxal 5'-phosphate as cofactor.

The protein localises to the cytoplasm. The catalysed reaction is (6R)-5,10-methylene-5,6,7,8-tetrahydrofolate + glycine + H2O = (6S)-5,6,7,8-tetrahydrofolate + L-serine. It functions in the pathway one-carbon metabolism; tetrahydrofolate interconversion. The protein operates within amino-acid biosynthesis; glycine biosynthesis; glycine from L-serine: step 1/1. Functionally, catalyzes the reversible interconversion of serine and glycine with tetrahydrofolate (THF) serving as the one-carbon carrier. This reaction serves as the major source of one-carbon groups required for the biosynthesis of purines, thymidylate, methionine, and other important biomolecules. Also exhibits THF-independent aldolase activity toward beta-hydroxyamino acids, producing glycine and aldehydes, via a retro-aldol mechanism. The sequence is that of Serine hydroxymethyltransferase from Streptococcus pyogenes serotype M4 (strain MGAS10750).